The following is a 364-amino-acid chain: GDSL esterase/lipase EXL3 (364 aa).

Residues 1–32 form the signal peptide; it reads MKDNSSWSCSCSWSSWKICLLSVLFLTETITA. Residue serine 50 is the Nucleophile of the active site. Residues aspartate 339 and histidine 342 contribute to the active site.

This sequence belongs to the 'GDSL' lipolytic enzyme family. Flower buds.

It is found in the secreted. The chain is GDSL esterase/lipase EXL3 (EXL3) from Arabidopsis thaliana (Mouse-ear cress).